A 572-amino-acid chain; its full sequence is Methionine--tRNA ligase (572 aa).

The short motif at Pro11 to Asn21 is the 'HIGH' region element. Zn(2+) is bound by residues Cys143, Cys146, Cys156, and Cys159. A 'KMSKS' region motif is present at residues Lys341–Ser345. Residue Thr344 participates in ATP binding.

This sequence belongs to the class-I aminoacyl-tRNA synthetase family. MetG type 1 subfamily. In terms of assembly, monomer. The cofactor is Zn(2+).

The protein resides in the cytoplasm. It catalyses the reaction tRNA(Met) + L-methionine + ATP = L-methionyl-tRNA(Met) + AMP + diphosphate. In terms of biological role, is required not only for elongation of protein synthesis but also for the initiation of all mRNA translation through initiator tRNA(fMet) aminoacylation. The chain is Methionine--tRNA ligase from Maricaulis maris (strain MCS10) (Caulobacter maris).